A 142-amino-acid chain; its full sequence is Large ribosomal subunit protein uL23 (142 aa).

The protein belongs to the universal ribosomal protein uL23 family.

The chain is Large ribosomal subunit protein uL23 (RPL25) from Kluyveromyces lactis (strain ATCC 8585 / CBS 2359 / DSM 70799 / NBRC 1267 / NRRL Y-1140 / WM37) (Yeast).